A 226-amino-acid polypeptide reads, in one-letter code: Fibronectin type III domain-containing protein 9 (226 aa).

In terms of domain architecture, Fibronectin type-III spans Met-1 to Ala-101. The helical transmembrane segment at Leu-113–Leu-133 threads the bilayer.

The protein resides in the membrane. The polypeptide is Fibronectin type III domain-containing protein 9 (Fndc9) (Mus musculus (Mouse)).